The following is a 102-amino-acid chain: NADH-quinone oxidoreductase subunit K (102 aa).

The next 3 helical transmembrane spans lie at 5–25, 31–51, and 62–82; these read LAHYLILGAILFAIGIFGIFL, IILLMSIELMLLAVNMNFVAF, and VFVFFILTVAAAEAAIGLAIL.

This sequence belongs to the complex I subunit 4L family. NDH-1 is composed of 14 different subunits. Subunits NuoA, H, J, K, L, M, N constitute the membrane sector of the complex.

It is found in the cell inner membrane. The enzyme catalyses a quinone + NADH + 5 H(+)(in) = a quinol + NAD(+) + 4 H(+)(out). Its function is as follows. NDH-1 shuttles electrons from NADH, via FMN and iron-sulfur (Fe-S) centers, to quinones in the respiratory chain. The immediate electron acceptor for the enzyme in this species is believed to be ubiquinone. Couples the redox reaction to proton translocation (for every two electrons transferred, four hydrogen ions are translocated across the cytoplasmic membrane), and thus conserves the redox energy in a proton gradient. The chain is NADH-quinone oxidoreductase subunit K from Bordetella avium (strain 197N).